The sequence spans 118 residues: Large ribosomal subunit protein bL19 (118 aa).

The protein belongs to the bacterial ribosomal protein bL19 family.

Functionally, this protein is located at the 30S-50S ribosomal subunit interface and may play a role in the structure and function of the aminoacyl-tRNA binding site. The protein is Large ribosomal subunit protein bL19 of Marinobacter nauticus (strain ATCC 700491 / DSM 11845 / VT8) (Marinobacter aquaeolei).